The chain runs to 211 residues: Ribosomal RNA small subunit methyltransferase G (211 aa).

Residues glycine 81, leucine 86, 132 to 133, and arginine 147 each bind S-adenosyl-L-methionine; that span reads AE.

It belongs to the methyltransferase superfamily. RNA methyltransferase RsmG family.

It is found in the cytoplasm. The enzyme catalyses guanosine(527) in 16S rRNA + S-adenosyl-L-methionine = N(7)-methylguanosine(527) in 16S rRNA + S-adenosyl-L-homocysteine. In terms of biological role, specifically methylates the N7 position of guanine in position 527 of 16S rRNA. The polypeptide is Ribosomal RNA small subunit methyltransferase G (Dichelobacter nodosus (strain VCS1703A)).